The chain runs to 850 residues: MKNKDSLHVSRRRFLAQLGGLTVAGMLGPSLLTPRSARAADAVAPGAATKEGILTGSHWGAIRATVVDGRFVAAKPFEQDKYPSKMIAGLPDHVHNAARIRYPMVRVDWMRKGHQSDTSQRGDNRFVRVSWDEALDLFYQELERVQKTYGPSALLTASGWQSTGMFHNASGMLARAIALHGNSVSTGGDYSTGAAQVILPRVVGSMEVYEQQTSWPLVLQNSKTIVLWGSDMVKNQQANWWCPDHDVYQYYEQLKEKVASGAISVISIDPVVTSTHDYLGRDKVKHIAINPQTDVPLQLALAHTLYSEKLYDKNFLDNYCVGFDQFLPYLLGEKDGQPKDAAWAEKLCGIDADTIRALARQMAGDRTQIIAGWCVQRMQHGEQWSWMVVVLAAMLGQIGLPGGGFGFGWHYNGAGTPGRKGIILSGFSGSTTVPPVHDSTDYKGYSSTIPIARFMDAILEPGKIINWNGKSVKLPPLKMCVFAGTNPFHRHQQINRIIEGWRKLETVIAIDNQWTSTCRFADIVLPATTQFERNDLDQFGNHSNRGIIAMKQVVSPQFEARNDFDIFRDLCRRFNREAAFTEGLDEMGWLKRIWQEGSQQGKGRGIHLPTFEVFWNQQEYIEFDHPQMFVRHQAFREDPDLEPLGTPSGLIEIYSKTIADMQYDDCQGHPMWFEKIERSHGGPGSQRWPLHLQSVHPDFRLHSQLCESETLRQQYAVGGKEPVFINPQDASARGIRNGDIVRVFNARGQVLAGAVVSDRYAPGVARIHEGAWYDPDKGGDLNALCKYGNPNVLTLDTGTSQLAQATSAHTTLVEIEKYTGPMDNVTAFNGPAEMVAQCEYVPASQGNPHD.

Positions 1–39 (MKNKDSLHVSRRRFLAQLGGLTVAGMLGPSLLTPRSARA) form a signal peptide, tat-type signal. S191 is a Mo-bis(molybdopterin guanine dinucleotide) binding site.

Belongs to the prokaryotic molybdopterin-containing oxidoreductase family. Requires Mo-bis(molybdopterin guanine dinucleotide) as cofactor. Predicted to be exported by the Tat system. The position of the signal peptide cleavage has not been experimentally proven.

Its subcellular location is the periplasm. It carries out the reaction trimethylamine + 2 Fe(III)-[cytochrome c] + H2O = trimethylamine N-oxide + 2 Fe(II)-[cytochrome c] + 3 H(+). Its function is as follows. Reduces trimethylamine-N-oxide (TMAO) into trimethylamine; an anaerobic reaction coupled to energy-yielding reactions. The protein is Trimethylamine-N-oxide reductase (torA) of Salmonella typhi.